Consider the following 204-residue polypeptide: tRNA (pseudouridine(54)-N(1))-methyltransferase (204 aa).

Residues leucine 130, glycine 157, 180-185 (LSPLEL), and cysteine 190 contribute to the S-adenosyl-L-methionine site.

This sequence belongs to the methyltransferase superfamily. TrmY family. In terms of assembly, homodimer.

The protein resides in the cytoplasm. The catalysed reaction is pseudouridine(54) in tRNA + S-adenosyl-L-methionine = N(1)-methylpseudouridine(54) in tRNA + S-adenosyl-L-homocysteine + H(+). In terms of biological role, specifically catalyzes the N1-methylation of pseudouridine at position 54 (Psi54) in tRNAs. The protein is tRNA (pseudouridine(54)-N(1))-methyltransferase of Methanococcus aeolicus (strain ATCC BAA-1280 / DSM 17508 / OCM 812 / Nankai-3).